We begin with the raw amino-acid sequence, 230 residues long: DNA mismatch repair protein MutH (230 aa).

This sequence belongs to the MutH family.

The protein resides in the cytoplasm. Sequence-specific endonuclease that cleaves unmethylated GATC sequences. It is involved in DNA mismatch repair. The chain is DNA mismatch repair protein MutH from Enterobacter sp. (strain 638).